Consider the following 215-residue polypeptide: MKTVLLTGFDPFGGENINPAWEVAKNLHEKTIGEYKIISKQVPTVFHKSISVLKEYIEELAPEFIICIGQAGGRPDITIERVAINIDDARIADNEGNQPVDVPVVEEGPTAYWSTLPMKAIVKRLQEEGIPASVSQTAGTFVCNHLFYGLMHELEKRDKKIKGGFVHIPFLPEQASKYPGQPSMSLSTIRKGIELAVEVTMTVEVDIVEIGGATH.

Residues Glu80, Cys143, and His167 contribute to the active site.

This sequence belongs to the peptidase C15 family. Homotetramer.

It localises to the cytoplasm. The enzyme catalyses Release of an N-terminal pyroglutamyl group from a polypeptide, the second amino acid generally not being Pro.. Removes 5-oxoproline from various penultimate amino acid residues except L-proline. This Bacillus cereus (strain ATCC 10987 / NRS 248) protein is Pyrrolidone-carboxylate peptidase.